The following is a 145-amino-acid chain: Halilectin 3, alpha chain (145 aa).

N-linked (GlcNAc...) asparagine glycosylation occurs at N73.

Probable heterotrimer consisting of an alpha chain and two beta chains. The alpha chain can probably have different glycosylation states. In terms of processing, glycosylated.

Functionally, lectin with affinity for N-acetyl-galactosamine, carragenan and glycoprotein porcine stomach mucin (PSM). Has metal-independent hemagglutinating activity towards erythrocytes from rabbit and human. Hemagglutinating activity is not inhibited by D-galactose, D-glucose, D-mannose, D-fucose, methyl-alpha-D-galactopyranoside, methyl-alpha-D-glucopyranoside, N-acetyl-glucosamine, N-acetyl-mannosamine, D-fructose, alpha-D-lactose, beta-D-lactose, D-lactulose, D-sucrose, fucoidan or glycoproteins thyroglobulin and ovalmucoid. This Haliclona caerulea (Blue Caribbean sponge) protein is Halilectin 3, alpha chain.